The sequence spans 430 residues: MAAGLRLLLAGLCWSQFRVEDAASPPPPPAPVRCALLEGVGRGGGLPGGGNARPALLRFGGDAETPPEPGPEPEVTFNVSDPWGTLTPLGVPPRTPPSCELNPTNPQTGSDPWSRPLHPDARSPPTAGGQWWVAAVGTPQYGVTALLQGGMGTEGTITAAVALAVLTHTPTLRARVGSPIHLHCAFAAPPSSFVLEWRHQNRGAGRVLLAYDSSTARAPRAHPGAELLLGTRDGDGVTAVTLRLARPSPGDEGTYICSVFLPHGHTQTVLQLHVFEPPKVTLSPKNLVVAPGTSAELRCHVSGFYPLDVTVTWQRRAGGSGTSQSPRDTVMDSWTSGHRQAADGTYSRTAAARLIPARPQHHGDIYSCVVTHTALAKPMRVSVRLLLAGTEGPHLEDITGLFLVAFVLCGLIRWLYPKAARPKEETKKSQ.

A signal peptide spans 1–15 (MAAGLRLLLAGLCWS). Residues 16–399 (QFRVEDAASP…TEGPHLEDIT (384 aa)) are Lumenal-facing. C34 and C99 are joined by a disulfide. Positions 61-128 (GDAETPPEPG…PDARSPPTAG (68 aa)) are disordered. A glycan (N-linked (GlcNAc...) asparagine) is linked at N78. Over residues 101–111 (LNPTNPQTGSD) the composition is skewed to polar residues. 2 Ig-like C1-type domains span residues 139–273 (PQYG…LQLH) and 278–382 (PKVT…MRVS). C299 and C368 are joined by a disulfide. The disordered stretch occupies residues 316 to 342 (RAGGSGTSQSPRDTVMDSWTSGHRQAA). Residues 322-338 (TSQSPRDTVMDSWTSGH) show a composition bias toward polar residues. The helical transmembrane segment at 400–417 (GLFLVAFVLCGLIRWLYP) threads the bilayer. The Cytoplasmic segment spans residues 418-430 (KAARPKEETKKSQ).

Interacts with TAP1 and is thus a subunit of the TAP complex. Interaction with TAP1 is TAP2 independent and is required for efficient peptide-TAP interaction. Obligatory mediator for the interaction between newly assembled MHC class I molecules, calreticulin, ERp57 and TAP. Up to 4 MHC class I/tapasin complexes bind to 1 TAP.

Its subcellular location is the endoplasmic reticulum membrane. In terms of biological role, involved in the association of MHC class I with transporter associated with antigen processing (TAP) and in the assembly of MHC class I with peptide (peptide loading). This is Tapasin (TAPBP) from Gallus gallus (Chicken).